We begin with the raw amino-acid sequence, 292 residues long: Ribonuclease T2-like (292 aa).

The N-terminal stretch at 1–23 is a signal peptide; that stretch reads MAKTASAMLFLYLLLSRCLLSHA. Intrachain disulfides connect Cys-42-Cys-61, Cys-50-Cys-103, Cys-60-Cys-177, Cys-111-Cys-169, and Cys-246-Cys-280. Asn-52 is a glycosylation site (N-linked (GlcNAc...) asparagine). Active-site residues include His-96, Glu-162, and His-166.

Belongs to the RNase T2 family.

The protein localises to the vacuole lumen. It is found in the cytoplasm. It carries out the reaction a ribonucleotidyl-ribonucleotide-RNA + H2O = a 3'-end 3'-phospho-ribonucleotide-RNA + a 5'-end dephospho-ribonucleoside-RNA + H(+). Functionally, rnase which modulates cell survival under stress conditions. Released from the vacuole to the cytoplasm during stress to promote tRNA and rRNA cleavage and to activate separately a downstream pathway that promotes cell death. Involved in cell size, vacuolar morphology and growth at high temperatures and high salt concentration. This Eremothecium gossypii (strain ATCC 10895 / CBS 109.51 / FGSC 9923 / NRRL Y-1056) (Yeast) protein is Ribonuclease T2-like (RNY1).